Consider the following 517-residue polypeptide: Mucin-like protein 3 (517 aa).

Residues M1–A29 form the signal peptide. Residues T30–A448 are Extracellular-facing. The segment at S67–L341 is disordered. Residues Q83–S93 show a composition bias toward basic residues. An N-linked (GlcNAc...) asparagine glycan is attached at N88. A compositionally biased stretch (basic and acidic residues) spans T105–E116. A glycan (N-linked (GlcNAc...) asparagine) is linked at N124. The segment covering R169 to T179 has biased composition (polar residues). The segment covering R180–E190 has biased composition (basic and acidic residues). Residues S194–S213 show a composition bias toward low complexity. 3 stretches are compositionally biased toward polar residues: residues G214–F225, A232–P243, and T263–A283. The segment covering T305–K317 has biased composition (basic and acidic residues). Residue N338 is glycosylated (N-linked (GlcNAc...) asparagine). Residues I449–L469 traverse the membrane as a helical segment. Residues V470 to R517 lie on the Cytoplasmic side of the membrane.

Detected in lung, esophagus, stomach, rectum, skin, cervix, testis, kidney, uterus and small intestine. Expressed in pancreas (at protein level).

It localises to the cell membrane. Its subcellular location is the cytoplasm. Its function is as follows. May modulate NF-kappaB signaling and play a role in cell growth. This is Mucin-like protein 3 from Homo sapiens (Human).